The following is a 179-amino-acid chain: ATP synthase subunit delta (179 aa).

It belongs to the ATPase delta chain family. In terms of assembly, F-type ATPases have 2 components, F(1) - the catalytic core - and F(0) - the membrane proton channel. F(1) has five subunits: alpha(3), beta(3), gamma(1), delta(1), epsilon(1). F(0) has three main subunits: a(1), b(2) and c(10-14). The alpha and beta chains form an alternating ring which encloses part of the gamma chain. F(1) is attached to F(0) by a central stalk formed by the gamma and epsilon chains, while a peripheral stalk is formed by the delta and b chains.

The protein localises to the cell inner membrane. Functionally, f(1)F(0) ATP synthase produces ATP from ADP in the presence of a proton or sodium gradient. F-type ATPases consist of two structural domains, F(1) containing the extramembraneous catalytic core and F(0) containing the membrane proton channel, linked together by a central stalk and a peripheral stalk. During catalysis, ATP synthesis in the catalytic domain of F(1) is coupled via a rotary mechanism of the central stalk subunits to proton translocation. This protein is part of the stalk that links CF(0) to CF(1). It either transmits conformational changes from CF(0) to CF(1) or is implicated in proton conduction. In Paraburkholderia phytofirmans (strain DSM 17436 / LMG 22146 / PsJN) (Burkholderia phytofirmans), this protein is ATP synthase subunit delta.